The sequence spans 56 residues: UPF0391 membrane protein Noc_0482 (56 aa).

2 helical membrane-spanning segments follow: residues 1–21 (MFGW…FGFT) and 29–49 (HIAW…LLLG).

Belongs to the UPF0391 family.

The protein resides in the cell membrane. The protein is UPF0391 membrane protein Noc_0482 of Nitrosococcus oceani (strain ATCC 19707 / BCRC 17464 / JCM 30415 / NCIMB 11848 / C-107).